The chain runs to 291 residues: BTB/POZ domain-containing protein 19 (291 aa).

The region spanning serine 29–arginine 98 is the BTB domain. The region spanning cysteine 134–serine 234 is the BACK domain.

This chain is BTB/POZ domain-containing protein 19 (BTBD19), found in Homo sapiens (Human).